The sequence spans 651 residues: MLRLQMTDGHISCTAVEFSYMSKISLNTPPGTKVKLSGIVDIKNGFLLLNDSNTTVLGGEVEHLIEKWELQRSLSKHNRSNIGTEGGPPPFVPFGQKCVSHVQVDSRELDRRKTLQVTMPVKPTNDNDEFEKQRTAAIAEVAKSKETKTFGGGGGGARSNLNMNAAGNRNREVLQKEKSTKSEGKHEGVYRELVDEKALKHITEMGFSKEASRQALMDNGNNLEAALNVLLTSNKQKPVMGPPLRGRGKGRGRIRSEDEEDLGNARPSAPSTLFDFLESKMGTLNVEEPKSQPQQLHQGQYRSSNTEQNGVKDNNHLRHPPRNDTRQPRNEKPPRFQRDSQNSKSVLEGSGLPRNRGSERPSTSSVSEVWAEDRIKCDRPYSRYDRTKDTSYPLGSQHSDGAFKKRDNSMQSRSGKGPSFAEAKENPLPQGSVDYNNQKRGKRESQTSIPDYFYDRKSQTINNEAFSGIKIEKHFNVNTDYQNPVRSNSFIGVPNGEVEMPLKGRRIGPIKPAGPVTAVPCDDKIFYNSGPKRRSGPIKPEKILESSIPMEYAKMWKPGDECFALYWEDNKFYRAEVEALHSSGMTAVVKFIDYGNYEEVLLSNIKPIQTEAWEEEGTYDQTLEFRRGGDGQPRRSTRPTQQFYQPPRARN.

The UBA domain maps to 193 to 233; that stretch reads LVDEKALKHITEMGFSKEASRQALMDNGNNLEAALNVLLTS. 3 disordered regions span residues 234–271, 287–369, and 381–450; these read NKQKPVMGPPLRGRGKGRGRIRSEDEEDLGNARPSAPS, EEPK…VSEV, and YSRY…TSIP. S256 carries the phosphoserine modification. Residues 291–312 show a composition bias toward polar residues; sequence SQPQQLHQGQYRSSNTEQNGVK. The segment covering 313–338 has biased composition (basic and acidic residues); that stretch reads DNNHLRHPPRNDTRQPRNEKPPRFQR. S345 is modified (phosphoserine). K470 participates in a covalent cross-link: Glycyl lysine isopeptide (Lys-Gly) (interchain with G-Cter in SUMO2). A Tudor domain is found at 555–615; sequence MWKPGDECFA…KPIQTEAWEE (61 aa). Residues 624–633 are compositionally biased toward basic and acidic residues; the sequence is EFRRGGDGQP. Residues 624-651 are disordered; sequence EFRRGGDGQPRRSTRPTQQFYQPPRARN. The tract at residues 631 to 651 is EBM motif; may mediate interaction with the EJC; it reads GQPRRSTRPTQQFYQPPRARN.

As to quaternary structure, component of mRNA stress granules. Interacts with FMR1, FXR1, FXR2, EWSR1, FUS, SERBP1, EEF1A1 and DDX3X or DDX3Y, and with the small nuclear ribonucleoprotein-associated proteins SNRPB and SNRPN. Interacts with 'Lys-48'-linked tetra-ubiquitin, but not with monoubiquitin or 'Lys-63'-linked ubiquitin chains. May interact with the exon junction complex (EJC) composed at least of CASC3, EIF4A3, MAGOH and RBM8A. Interacts with POLR2A (via the C-terminal domain (CTD)). In terms of processing, probably cleaved by enteroviral 2A proteinase. Detected in heart, brain, placenta, lung, liver, skeletal muscle, kidney and pancreas.

The protein localises to the cytoplasm. Its subcellular location is the nucleus. Functionally, scaffolding protein that specifically recognizes and binds dimethylarginine-containing proteins. Plays a role in the regulation of translation of target mRNAs by binding Arg/Gly-rich motifs (GAR) in dimethylarginine-containing proteins. In nucleus, acts as a coactivator: recognizes and binds asymmetric dimethylation on the core histone tails associated with transcriptional activation (H3R17me2a and H4R3me2a) and recruits proteins at these arginine-methylated loci. In cytoplasm, acts as an antiviral factor that participates in the assembly of stress granules together with G3BP1. In Homo sapiens (Human), this protein is Tudor domain-containing protein 3 (TDRD3).